Consider the following 213-residue polypeptide: Imidazole glycerol phosphate synthase subunit HisH (213 aa).

The Glutamine amidotransferase type-1 domain maps to serine 4–proline 213. Catalysis depends on cysteine 83, which acts as the Nucleophile. Residues histidine 193 and glutamate 195 contribute to the active site.

In terms of assembly, heterodimer of HisH and HisF.

It localises to the cytoplasm. It carries out the reaction 5-[(5-phospho-1-deoxy-D-ribulos-1-ylimino)methylamino]-1-(5-phospho-beta-D-ribosyl)imidazole-4-carboxamide + L-glutamine = D-erythro-1-(imidazol-4-yl)glycerol 3-phosphate + 5-amino-1-(5-phospho-beta-D-ribosyl)imidazole-4-carboxamide + L-glutamate + H(+). The catalysed reaction is L-glutamine + H2O = L-glutamate + NH4(+). The protein operates within amino-acid biosynthesis; L-histidine biosynthesis; L-histidine from 5-phospho-alpha-D-ribose 1-diphosphate: step 5/9. IGPS catalyzes the conversion of PRFAR and glutamine to IGP, AICAR and glutamate. The HisH subunit catalyzes the hydrolysis of glutamine to glutamate and ammonia as part of the synthesis of IGP and AICAR. The resulting ammonia molecule is channeled to the active site of HisF. The chain is Imidazole glycerol phosphate synthase subunit HisH from Burkholderia multivorans (strain ATCC 17616 / 249).